The chain runs to 89 residues: Small ribosomal subunit protein uS15 (89 aa).

This sequence belongs to the universal ribosomal protein uS15 family. Part of the 30S ribosomal subunit. Forms a bridge to the 50S subunit in the 70S ribosome, contacting the 23S rRNA.

Functionally, one of the primary rRNA binding proteins, it binds directly to 16S rRNA where it helps nucleate assembly of the platform of the 30S subunit by binding and bridging several RNA helices of the 16S rRNA. In terms of biological role, forms an intersubunit bridge (bridge B4) with the 23S rRNA of the 50S subunit in the ribosome. The protein is Small ribosomal subunit protein uS15 of Shewanella baltica (strain OS223).